Consider the following 468-residue polypeptide: UDP-N-acetylmuramate--L-alanine ligase (468 aa).

114–120 (GTHGKTT) lines the ATP pocket.

It belongs to the MurCDEF family.

The protein resides in the cytoplasm. It carries out the reaction UDP-N-acetyl-alpha-D-muramate + L-alanine + ATP = UDP-N-acetyl-alpha-D-muramoyl-L-alanine + ADP + phosphate + H(+). It participates in cell wall biogenesis; peptidoglycan biosynthesis. In terms of biological role, cell wall formation. This Rhodopseudomonas palustris (strain HaA2) protein is UDP-N-acetylmuramate--L-alanine ligase.